Reading from the N-terminus, the 184-residue chain is Outer-membrane lipoprotein carrier protein (184 aa).

Positions 1-19 are cleaved as a signal peptide; it reads MRAFLKILMVLIFMSVAYA.

The protein belongs to the LolA family. Monomer.

Its subcellular location is the periplasm. In terms of biological role, participates in the translocation of lipoproteins from the inner membrane to the outer membrane. Only forms a complex with a lipoprotein if the residue after the N-terminal Cys is not an aspartate (The Asp acts as a targeting signal to indicate that the lipoprotein should stay in the inner membrane). The protein is Outer-membrane lipoprotein carrier protein of Helicobacter pylori (strain HPAG1).